The sequence spans 559 residues: Estrogen receptor beta (559 aa).

Residues 1–155 form a modulating region; it reads MAVACSPEKD…SSGGKADLHF (155 aa). The tract at residues 128–148 is disordered; the sequence is TSSKSARRRSQENEEGEVSSG. 2 NR C4-type zinc fingers span residues 156–176 and 192–216; these read CAVC…CEGC and CPAT…LHKC. Residues 156–221 constitute a DNA-binding region (nuclear receptor); sequence CAVCHDYASG…RLHKCYNVGM (66 aa). Polar residues predominate over residues 243-254; the sequence is RLSSQGRTSGPS. The tract at residues 243–269 is disordered; it reads RLSSQGRTSGPSVLNGPAVGPLNTPQP. An NR LBD domain is found at 273-509; the sequence is TSKQLIERIM…DLLLEMLDAH (237 aa). Positions 514–559 are disordered; that stretch reads SRLPRRSPQQETVEQCDAPARPHSPGTSGPTNTWTPSCTGGRGEPQ. Residues 538–551 are compositionally biased toward polar residues; the sequence is PGTSGPTNTWTPSC.

The protein belongs to the nuclear hormone receptor family. NR3 subfamily. Binds DNA as a homodimer. Can form a heterodimer with ER-alpha.

It localises to the nucleus. Functionally, binds estrogens with an affinity similar to that of ER-alpha, and activates expression of reporter genes containing estrogen response elements (ERE) in an estrogen-dependent manner. The chain is Estrogen receptor beta (esr2) from Sparus aurata (Gilthead sea bream).